The chain runs to 155 residues: Transcription antitermination protein NusB (155 aa).

The protein belongs to the NusB family.

In terms of biological role, involved in transcription antitermination. Required for transcription of ribosomal RNA (rRNA) genes. Binds specifically to the boxA antiterminator sequence of the ribosomal RNA (rrn) operons. The chain is Transcription antitermination protein NusB from Azoarcus sp. (strain BH72).